Reading from the N-terminus, the 492-residue chain is Fumarate hydratase 1, mitochondrial (492 aa).

A mitochondrion-targeting transit peptide spans 1–28 (MSIYVASRRLSGGTTVTALRYATSLRSY). Residues 127 to 129 (SGT), 157 to 160 (HPND), 167 to 169 (SSN), and T215 each bind substrate. Catalysis depends on H216, which acts as the Proton donor/acceptor. S346 is a catalytic residue. Residues S347 and 352–354 (KVN) each bind substrate.

The protein belongs to the class-II fumarase/aspartase family. Fumarase subfamily. As to quaternary structure, homotetramer.

It is found in the mitochondrion. It catalyses the reaction (S)-malate = fumarate + H2O. It functions in the pathway carbohydrate metabolism; tricarboxylic acid cycle; (S)-malate from fumarate: step 1/1. Fumarate hydratase activity (fumarate to L-malate) is strongly inhibited by phosphoenolpyruvate, citrate, oxaloacetate, ATP and ADP. Malate dehydratase activity (malate to fumarate) is activated by oxaloacetate, pyruvate, Asn and Gln. Malate dehydratase activity (malate to fumarate) is inhibited by citrate, succinate, ADP, ATP, glucose-6P and phosphoenolpyruvate. Functionally, catalyzes the reversible stereospecific interconversion of fumarate to L-malate. Catalyzes the hydration of fumarate to L-malate in the tricarboxylic acid (TCA) cycle to facilitate a transition step in the production of energy in the form of NADH. The chain is Fumarate hydratase 1, mitochondrial from Arabidopsis thaliana (Mouse-ear cress).